A 348-amino-acid polypeptide reads, in one-letter code: Glucokinase (348 aa).

14–19 contacts ATP; it reads GDVGGS. Residues 327-348 are disordered; sequence SDPAPVAAPTHPRGGTAGDMHA.

Belongs to the bacterial glucokinase family.

It is found in the cytoplasm. The enzyme catalyses D-glucose + ATP = D-glucose 6-phosphate + ADP + H(+). The protein is Glucokinase of Chromobacterium violaceum (strain ATCC 12472 / DSM 30191 / JCM 1249 / CCUG 213 / NBRC 12614 / NCIMB 9131 / NCTC 9757 / MK).